Here is a 117-residue protein sequence, read N- to C-terminus: Non-specific lipid-transfer protein 1 (117 aa).

A signal peptide spans 1 to 26; the sequence is MARAQVLLMAAALVLMLTAAPRAAVA. Intrachain disulfides connect C29–C76, C39–C53, C54–C99, and C74–C113. A lipid anchor (Cis-14-hydroxy-10,13-dioxo-7-heptadecenoic acid aspartate ester) is attached at D33.

Belongs to the plant LTP family. As to expression, aleurone layer of developing and germinating seeds.

Its function is as follows. Plant non-specific lipid-transfer proteins transfer phospholipids as well as galactolipids across membranes. May play a role in wax or cutin deposition in the cell walls of expanding epidermal cells and certain secretory tissues. The polypeptide is Non-specific lipid-transfer protein 1 (LTP1) (Hordeum vulgare (Barley)).